The sequence spans 341 residues: DNA-directed RNA polymerase subunit alpha (341 aa).

The interval 1 to 233 (MVREEVAGST…DLFLPFLHAE (233 aa)) is alpha N-terminal domain (alpha-NTD). The alpha C-terminal domain (alpha-CTD) stretch occupies residues 269-341 (IPLNCIFIDQ…IDLLKNKLSF (73 aa)).

Belongs to the RNA polymerase alpha chain family. In plastids the minimal PEP RNA polymerase catalytic core is composed of four subunits: alpha, beta, beta', and beta''. When a (nuclear-encoded) sigma factor is associated with the core the holoenzyme is formed, which can initiate transcription.

It is found in the plastid. Its subcellular location is the chloroplast. The enzyme catalyses RNA(n) + a ribonucleoside 5'-triphosphate = RNA(n+1) + diphosphate. In terms of biological role, DNA-dependent RNA polymerase catalyzes the transcription of DNA into RNA using the four ribonucleoside triphosphates as substrates. This chain is DNA-directed RNA polymerase subunit alpha, found in Lolium perenne (Perennial ryegrass).